The chain runs to 286 residues: Phosphatidylserine decarboxylase proenzyme (286 aa).

Active-site charge relay system; for autoendoproteolytic cleavage activity residues include D90, H147, and S253. Residue S253 is the Schiff-base intermediate with substrate; via pyruvic acid; for decarboxylase activity of the active site. Position 253 is a pyruvic acid (Ser); by autocatalysis (S253).

This sequence belongs to the phosphatidylserine decarboxylase family. PSD-B subfamily. Prokaryotic type I sub-subfamily. In terms of assembly, heterodimer of a large membrane-associated beta subunit and a small pyruvoyl-containing alpha subunit. The cofactor is pyruvate. Is synthesized initially as an inactive proenzyme. Formation of the active enzyme involves a self-maturation process in which the active site pyruvoyl group is generated from an internal serine residue via an autocatalytic post-translational modification. Two non-identical subunits are generated from the proenzyme in this reaction, and the pyruvate is formed at the N-terminus of the alpha chain, which is derived from the carboxyl end of the proenzyme. The autoendoproteolytic cleavage occurs by a canonical serine protease mechanism, in which the side chain hydroxyl group of the serine supplies its oxygen atom to form the C-terminus of the beta chain, while the remainder of the serine residue undergoes an oxidative deamination to produce ammonia and the pyruvoyl prosthetic group on the alpha chain. During this reaction, the Ser that is part of the protease active site of the proenzyme becomes the pyruvoyl prosthetic group, which constitutes an essential element of the active site of the mature decarboxylase.

The protein localises to the cell membrane. The enzyme catalyses a 1,2-diacyl-sn-glycero-3-phospho-L-serine + H(+) = a 1,2-diacyl-sn-glycero-3-phosphoethanolamine + CO2. It functions in the pathway phospholipid metabolism; phosphatidylethanolamine biosynthesis; phosphatidylethanolamine from CDP-diacylglycerol: step 2/2. Its function is as follows. Catalyzes the formation of phosphatidylethanolamine (PtdEtn) from phosphatidylserine (PtdSer). The chain is Phosphatidylserine decarboxylase proenzyme from Pseudoalteromonas atlantica (strain T6c / ATCC BAA-1087).